Reading from the N-terminus, the 639-residue chain is mRNA export factor (639 aa).

Disordered regions lie at residues 1–45 (MQAE…SLES), 63–287 (LLGD…KWGA), and 322–355 (CTAR…SQPR). Residues 142 to 152 (PRRRTHARSRS) are compositionally biased toward basic residues. The segment covering 153-169 (PRAGSTSSQQPPSSSGG) has biased composition (low complexity). The span at 175–189 (VRREAGDRETSEKPA) shows a compositional bias: basic and acidic residues. Residues 203 to 215 (HQCQSPPAQTASQ) show a composition bias toward polar residues. 2 stretches are compositionally biased toward basic and acidic residues: residues 234-247 (RTPH…HEGA) and 326-348 (DPAR…ERRT). Residues C525, H606, C610, and C615 each coordinate Zn(2+). The CHC2-type zinc-finger motif lies at 525–615 (CHLAASKSPL…HANVCRKEEC (91 aa)).

It belongs to the HHV-1 ICP27 protein family.

It localises to the host cytoplasm. The protein localises to the host nucleus. In terms of biological role, multifunctional regulator of the expression of viral genes that mediates nuclear export of viral intronless mRNAs. This immediate early (EI) protein promotes the nuclear export of viral intronless mRNAs. The sequence is that of mRNA export factor from Amazona oratrix (yellow-headed parrot).